Reading from the N-terminus, the 726-residue chain is MSTTDDTHNTLSTGKCPFHQGGHDRSAGAGTASRDWWPNQLRVDLLNQHSNRSNPLGEDFDYRKEFSKLDYSALKGDLKALLTDSQPWWPADWGSYVGLFIRMAWHGAGTYRSIDGRGGAGRGQQRFAPLNSWPDNVSLDKARRLLWPIKQKYGQKISWADLFILAGNVALENSGFRTFGFGAGREDVWEPDLDVNWGDEKAWLTHRHPEALAKAPLGATEMGLIYVNPEGPDHSGEPLSAAAAIRATFGNMGMNDEETVALIAGGHTLGKTHGAAAASHVGADPEAAPIEAQGLGWASSYGSGVGADAITSGLEVVWTQTPTQWSNYFFENLFKYEWVQTRSPAGAIQFEAVDAPDIIPDPFDPSKKRKPTMLVTDLTLRFDPEFEKISRRFLNDPQAFNEAFARAWFKLTHRDMGPKARYIGPEVPKEDLIWQDPLPQPLYQPTQEDIINLKAAIAASGLSISEMVSVAWASASTFRGGDKRGGANGARLALAPQRDWDVNAVAARVLPVLEEIQKTTNKASLADIIVLAGVVGIEQAAAAAGVSISVPFAPGRVDARQDQTDIEMFSLLEPIADGFRNYRARLDVSTTESLLIDKAQQLTLTAPEMTVLVGGMRVLGTNFDGSQNGVFTDRPGVLSTDFFANLLDMSYEWKPTDESNELFEGRDRLTGEVKYTATRADLVFGSNSVLRALAEVYACSDAHEKFVKDFVAAWVKVMNLDRFDLQ.

The segment at 1-33 (MSTTDDTHNTLSTGKCPFHQGGHDRSAGAGTAS) is disordered. A cross-link (tryptophyl-tyrosyl-methioninium (Trp-Tyr) (with M-252)) is located at residues 105–226 (WHGAGTYRSI…LGATEMGLIY (122 aa)). H106 functions as the Proton acceptor in the catalytic mechanism. A cross-link (tryptophyl-tyrosyl-methioninium (Tyr-Met) (with W-105)) is located at residues 226–252 (YVNPEGPDHSGEPLSAAAAIRATFGNM). A heme b-binding site is contributed by H267.

The protein belongs to the peroxidase family. Peroxidase/catalase subfamily. In terms of assembly, homodimer or homotetramer. Heme b serves as cofactor. Formation of the three residue Trp-Tyr-Met cross-link is important for the catalase, but not the peroxidase activity of the enzyme.

The catalysed reaction is H2O2 + AH2 = A + 2 H2O. It carries out the reaction 2 H2O2 = O2 + 2 H2O. Its function is as follows. Bifunctional enzyme with both catalase and broad-spectrum peroxidase activity. This Salmonella paratyphi B (strain ATCC BAA-1250 / SPB7) protein is Catalase-peroxidase.